A 265-amino-acid polypeptide reads, in one-letter code: Cytochrome c oxidase subunit 3 (265 aa).

7 consecutive transmembrane segments (helical) span residues 16–36 (PWPI…VMYM), 41–61 (GGAT…FVWW), 81–101 (GPRY…FAFF), 137–157 (TPIL…ILAG), 162–182 (AVYA…FQGM), 200–220 (FFLA…FLII), and 245–265 (WHFV…WGGI).

Belongs to the cytochrome c oxidase subunit 3 family. As to quaternary structure, component of the cytochrome c oxidase (complex IV, CIV), a multisubunit enzyme composed of a catalytic core of 3 subunits and several supernumerary subunits. The complex exists as a monomer or a dimer and forms supercomplexes (SCs) in the inner mitochondrial membrane with ubiquinol-cytochrome c oxidoreductase (cytochrome b-c1 complex, complex III, CIII).

Its subcellular location is the mitochondrion inner membrane. It carries out the reaction 4 Fe(II)-[cytochrome c] + O2 + 8 H(+)(in) = 4 Fe(III)-[cytochrome c] + 2 H2O + 4 H(+)(out). Its function is as follows. Component of the cytochrome c oxidase, the last enzyme in the mitochondrial electron transport chain which drives oxidative phosphorylation. The respiratory chain contains 3 multisubunit complexes succinate dehydrogenase (complex II, CII), ubiquinol-cytochrome c oxidoreductase (cytochrome b-c1 complex, complex III, CIII) and cytochrome c oxidase (complex IV, CIV), that cooperate to transfer electrons derived from NADH and succinate to molecular oxygen, creating an electrochemical gradient over the inner membrane that drives transmembrane transport and the ATP synthase. Cytochrome c oxidase is the component of the respiratory chain that catalyzes the reduction of oxygen to water. Electrons originating from reduced cytochrome c in the intermembrane space (IMS) are transferred via the dinuclear copper A center (CU(A)) of subunit 2 and heme A of subunit 1 to the active site in subunit 1, a binuclear center (BNC) formed by heme A3 and copper B (CU(B)). The BNC reduces molecular oxygen to 2 water molecules using 4 electrons from cytochrome c in the IMS and 4 protons from the mitochondrial matrix. In Vicia faba (Broad bean), this protein is Cytochrome c oxidase subunit 3 (COX3).